We begin with the raw amino-acid sequence, 61 residues long: Metallothionein-2 (61 aa).

Met-1 carries the post-translational modification N-acetylmethionine. A beta region spans residues 1–29 (MDPNCSCAAGGSCTCAGSCKCKECRCTSC). The a divalent metal cation site is built by Cys-5, Cys-7, Cys-13, Cys-15, Cys-19, Cys-21, Cys-24, Cys-26, Cys-29, Cys-33, Cys-34, Cys-36, Cys-37, Cys-41, Cys-44, Cys-48, Cys-50, and Cys-57. An alpha region spans residues 30 to 61 (KKSCCSCCPVGCAKCAQGCICKGASDKCSCCA). Phosphoserine is present on Ser-58. A divalent metal cation-binding residues include Cys-59 and Cys-60.

The protein belongs to the metallothionein superfamily. Type 1 family. In terms of assembly, interacts with EOLA1.

In terms of biological role, metallothioneins have a high content of cysteine residues that bind various heavy metals; these proteins are transcriptionally regulated by both heavy metals and glucocorticoids. The polypeptide is Metallothionein-2 (MT2A) (Canis lupus familiaris (Dog)).